Here is a 326-residue protein sequence, read N- to C-terminus: tRNA(Ile)-lysidine synthase (326 aa).

ATP is bound at residue 33–38 (SGGPDS).

The protein belongs to the tRNA(Ile)-lysidine synthase family.

Its subcellular location is the cytoplasm. It carries out the reaction cytidine(34) in tRNA(Ile2) + L-lysine + ATP = lysidine(34) in tRNA(Ile2) + AMP + diphosphate + H(+). Its function is as follows. Ligates lysine onto the cytidine present at position 34 of the AUA codon-specific tRNA(Ile) that contains the anticodon CAU, in an ATP-dependent manner. Cytidine is converted to lysidine, thus changing the amino acid specificity of the tRNA from methionine to isoleucine. The polypeptide is tRNA(Ile)-lysidine synthase (Novosphingobium aromaticivorans (strain ATCC 700278 / DSM 12444 / CCUG 56034 / CIP 105152 / NBRC 16084 / F199)).